Consider the following 90-residue polypeptide: Mu-theraphotoxin-Phlo1b (90 aa).

The signal sequence occupies residues 1–22; it reads MKVSVLITLAVLGVMFVWTSAA. Positions 23 to 50 are excised as a propeptide; sequence EQEDHGSDRRDSPALLKSLGRVFQSEER. 3 disulfide bridges follow: C52-C66, C59-C71, and C65-C79. The residue at position 85 (F85) is a Phenylalanine amide. Residues 86-90 constitute a propeptide that is removed on maturation; sequence GNEKS.

It belongs to the neurotoxin 10 (Hwtx-1) family. 39 (Jztx-34) subfamily. Expressed by the venom gland.

The protein resides in the secreted. Functionally, gating-modifier toxin that inhibits voltage-gated sodium channel Nav by shifting the threshold for channel activation to more positive potentials. This toxin moderately inhibits human Nav1.7/SCN9A (IC(50)=360 nM) and weakly inhibits hNav1.2/SCN2A (37% inhibition at 1 uM peptide) and hNav1.5/SCN5A (&lt;20% inhibition at 1 uM peptide). Inhibition of Nav1.7 is voltage-dependent, with lower inhibition at more positive test pulses. The chain is Mu-theraphotoxin-Phlo1b from Phlogius sp. (Tarantula spider).